The sequence spans 710 residues: Methionine--tRNA ligase (710 aa).

The short motif at 26–36 (PYANGQIHIGH) is the 'HIGH' region element. Zn(2+) contacts are provided by Cys157, Cys160, Cys170, and Cys173. Residues 347–351 (KMSKS) carry the 'KMSKS' region motif. Lys350 contacts ATP. In terms of domain architecture, tRNA-binding spans 604 to 710 (DFAKIDLRIA…SGAKPGMRVK (107 aa)).

Belongs to the class-I aminoacyl-tRNA synthetase family. MetG type 1 subfamily. In terms of assembly, homodimer. Zn(2+) serves as cofactor.

It localises to the cytoplasm. It catalyses the reaction tRNA(Met) + L-methionine + ATP = L-methionyl-tRNA(Met) + AMP + diphosphate. Its function is as follows. Is required not only for elongation of protein synthesis but also for the initiation of all mRNA translation through initiator tRNA(fMet) aminoacylation. The sequence is that of Methionine--tRNA ligase from Paraburkholderia xenovorans (strain LB400).